Here is a 100-residue protein sequence, read N- to C-terminus: NADH-quinone oxidoreductase subunit K (100 aa).

3 consecutive transmembrane segments (helical) span residues I2–I22, L29–F49, and F63–W83.

It belongs to the complex I subunit 4L family. As to quaternary structure, NDH-1 is composed of 14 different subunits. Subunits NuoA, H, J, K, L, M, N constitute the membrane sector of the complex.

Its subcellular location is the cell inner membrane. It catalyses the reaction a quinone + NADH + 5 H(+)(in) = a quinol + NAD(+) + 4 H(+)(out). In terms of biological role, NDH-1 shuttles electrons from NADH, via FMN and iron-sulfur (Fe-S) centers, to quinones in the respiratory chain. The immediate electron acceptor for the enzyme in this species is believed to be ubiquinone. Couples the redox reaction to proton translocation (for every two electrons transferred, four hydrogen ions are translocated across the cytoplasmic membrane), and thus conserves the redox energy in a proton gradient. This is NADH-quinone oxidoreductase subunit K from Nitratiruptor sp. (strain SB155-2).